Consider the following 432-residue polypeptide: Trigger factor (432 aa).

In terms of domain architecture, PPIase FKBP-type spans 161–246 (EDRVTIDFTG…LKKVEERELP (86 aa)).

The protein belongs to the FKBP-type PPIase family. Tig subfamily.

The protein resides in the cytoplasm. The catalysed reaction is [protein]-peptidylproline (omega=180) = [protein]-peptidylproline (omega=0). In terms of biological role, involved in protein export. Acts as a chaperone by maintaining the newly synthesized protein in an open conformation. Functions as a peptidyl-prolyl cis-trans isomerase. The protein is Trigger factor of Salmonella typhi.